A 194-amino-acid polypeptide reads, in one-letter code: Inosine triphosphate pyrophosphatase (194 aa).

8–13 (TGNANK) lines the ITP pocket. A Mg(2+)-binding site is contributed by glutamate 47. Residues lysine 59, 75–76 (DT), lysine 92, 151–154 (FGWD), lysine 174, and 179–180 (HR) each bind ITP.

It belongs to the HAM1 NTPase family. As to quaternary structure, homodimer. Mg(2+) serves as cofactor. It depends on Mn(2+) as a cofactor.

It localises to the cytoplasm. The protein resides in the nucleus. It carries out the reaction ITP + H2O = IMP + diphosphate + H(+). It catalyses the reaction dITP + H2O = dIMP + diphosphate + H(+). The enzyme catalyses XTP + H2O = XMP + diphosphate + H(+). Pyrophosphatase that hydrolyzes non-canonical purine nucleotides such as inosine triphosphate (ITP), deoxyinosine triphosphate (dITP) or xanthosine 5'-triphosphate (XTP) to their respective monophosphate derivatives. The enzyme does not distinguish between the deoxy- and ribose forms. Probably excludes non-canonical purines from RNA and DNA precursor pools, thus preventing their incorporation into RNA and DNA and avoiding chromosomal lesions. In Scheffersomyces stipitis (strain ATCC 58785 / CBS 6054 / NBRC 10063 / NRRL Y-11545) (Yeast), this protein is Inosine triphosphate pyrophosphatase.